The primary structure comprises 475 residues: Aspartyl/glutamyl-tRNA(Asn/Gln) amidotransferase subunit B (475 aa).

Belongs to the GatB/GatE family. GatB subfamily. Heterotrimer of A, B and C subunits.

It catalyses the reaction L-glutamyl-tRNA(Gln) + L-glutamine + ATP + H2O = L-glutaminyl-tRNA(Gln) + L-glutamate + ADP + phosphate + H(+). The enzyme catalyses L-aspartyl-tRNA(Asn) + L-glutamine + ATP + H2O = L-asparaginyl-tRNA(Asn) + L-glutamate + ADP + phosphate + 2 H(+). In terms of biological role, allows the formation of correctly charged Asn-tRNA(Asn) or Gln-tRNA(Gln) through the transamidation of misacylated Asp-tRNA(Asn) or Glu-tRNA(Gln) in organisms which lack either or both of asparaginyl-tRNA or glutaminyl-tRNA synthetases. The reaction takes place in the presence of glutamine and ATP through an activated phospho-Asp-tRNA(Asn) or phospho-Glu-tRNA(Gln). The chain is Aspartyl/glutamyl-tRNA(Asn/Gln) amidotransferase subunit B from Bacillus cereus (strain ZK / E33L).